The following is a 552-amino-acid chain: Indole-3-pyruvate decarboxylase (552 aa).

A thiamine diphosphate-binding site is contributed by Glu-52. The interval 385–466 is thiamine pyrophosphate binding; sequence TSAFGAIDLR…ILVLNNEGYT (82 aa). The Mg(2+) site is built by Asp-435 and Asn-462.

Belongs to the TPP enzyme family. Homotetramer. The cofactor is a metal cation. Thiamine diphosphate is required as a cofactor.

It catalyses the reaction indole-3-pyruvate + H(+) = indole-3-acetaldehyde + CO2. Its pathway is plant hormone metabolism; auxin biosynthesis. The protein is Indole-3-pyruvate decarboxylase (ipdC) of Enterobacter cloacae.